The following is a 125-amino-acid chain: Large ribosomal subunit protein bL12 (125 aa).

This sequence belongs to the bacterial ribosomal protein bL12 family. As to quaternary structure, homodimer. Part of the ribosomal stalk of the 50S ribosomal subunit. Forms a multimeric L10(L12)X complex, where L10 forms an elongated spine to which 2 to 4 L12 dimers bind in a sequential fashion. Binds GTP-bound translation factors.

Forms part of the ribosomal stalk which helps the ribosome interact with GTP-bound translation factors. Is thus essential for accurate translation. The polypeptide is Large ribosomal subunit protein bL12 (Caldanaerobacter subterraneus subsp. tengcongensis (strain DSM 15242 / JCM 11007 / NBRC 100824 / MB4) (Thermoanaerobacter tengcongensis)).